Consider the following 121-residue polypeptide: Small ribosomal subunit protein bS6 (121 aa).

The interval 99–121 (PLPAPRVAPGTEAPAEPEAAAPA) is disordered. Positions 110-121 (EAPAEPEAAAPA) are enriched in low complexity.

The protein belongs to the bacterial ribosomal protein bS6 family.

Functionally, binds together with bS18 to 16S ribosomal RNA. The chain is Small ribosomal subunit protein bS6 from Synechococcus sp. (strain CC9311).